A 553-amino-acid polypeptide reads, in one-letter code: Chaperonin GroEL (553 aa).

Residues T30 to P33, K51, D87 to T91, G415, and D495 contribute to the ATP site.

Belongs to the chaperonin (HSP60) family. As to quaternary structure, forms a cylinder of 14 subunits composed of two heptameric rings stacked back-to-back. Interacts with the co-chaperonin GroES.

It localises to the cytoplasm. It catalyses the reaction ATP + H2O + a folded polypeptide = ADP + phosphate + an unfolded polypeptide.. Its function is as follows. Together with its co-chaperonin GroES, plays an essential role in assisting protein folding. The GroEL-GroES system forms a nano-cage that allows encapsulation of the non-native substrate proteins and provides a physical environment optimized to promote and accelerate protein folding. The polypeptide is Chaperonin GroEL (Buchnera aphidicola subsp. Tuberolachnus salignus).